Here is a 1449-residue protein sequence, read N- to C-terminus: Spike glycoprotein (1449 aa).

A signal peptide spans 1–28; it reads MKKLFVVLVVMPLIYGDNFPCSKLTNRT. S1 regions lie at residues 17 to 776 and 29 to 776; these read DNFP…FYYY and IGNH…FYYY. The Virion surface portion of the chain corresponds to 29-1390; it reads IGNHWNLIET…NRIETYVKWP (1362 aa). The tract at residues 657–801 is interaction with host ANPEP; the sequence is VIYEEGDNIV…DSNDVDCEPV (145 aa). Residues 777–1449 are S2; that stretch reads SIYNYTNDMT…YEPIEKVHIH (673 aa). Residues 1022 to 1043 form a fusion peptide region; it reads AGGITLGALGGGAVAIPFAVAV. Residues 1037–1156 are heptad repeat 1 (HR1); that stretch reads IPFAVAVQAR…HVDRLITGRL (120 aa). Coiled coils occupy residues 1104-1148 and 1338-1380; these read QDVV…DAHV and TYLN…LEWL. The heptad repeat 2 (HR2) stretch occupies residues 1305–1402; that stretch reads PDYIDINQTV…VWLLIGLVVI (98 aa). A helical membrane pass occupies residues 1391-1410; the sequence is WYVWLLIGLVVIFCIPLLLF. The Intravirion portion of the chain corresponds to 1411 to 1449; it reads CCCSTGCCGCIGCLGSCCHSICSRRQFENYEPIEKVHIH. A KxHxx motif is present at residues 1445-1449; it reads KVHIH.

The protein belongs to the alphacoronaviruses spike protein family. As to quaternary structure, homotrimer. During virus morphogenesis, found in a complex with M and HE proteins. Interacts with host ANPEP.

It localises to the virion membrane. The protein localises to the host endoplasmic reticulum-Golgi intermediate compartment membrane. Its function is as follows. S1 region attaches the virion to the cell membrane by interacting with host ANPEP/aminopeptidase N, initiating the infection. Binding to the receptor probably induces conformational changes in the S glycoprotein unmasking the fusion peptide of S2 region and activating membranes fusion. S2 region belongs to the class I viral fusion protein. Under the current model, the protein has at least 3 conformational states: pre-fusion native state, pre-hairpin intermediate state, and post-fusion hairpin state. During viral and target cell membrane fusion, the coiled coil regions (heptad repeats) regions assume a trimer-of-hairpins structure, positioning the fusion peptide in close proximity to the C-terminal region of the ectodomain. The formation of this structure appears to drive apposition and subsequent fusion of viral and target cell membranes. This is Spike glycoprotein from Porcine transmissible gastroenteritis coronavirus (strain FS772/70) (TGEV).